The chain runs to 67 residues: Large ribosomal subunit protein uL30 (67 aa).

It belongs to the universal ribosomal protein uL30 family. Part of the 50S ribosomal subunit.

This chain is Large ribosomal subunit protein uL30, found in Thermotoga maritima (strain ATCC 43589 / DSM 3109 / JCM 10099 / NBRC 100826 / MSB8).